A 382-amino-acid polypeptide reads, in one-letter code: Anhydro-N-acetylmuramic acid kinase (382 aa).

Gly18–Asp25 provides a ligand contact to ATP.

It belongs to the anhydro-N-acetylmuramic acid kinase family.

It carries out the reaction 1,6-anhydro-N-acetyl-beta-muramate + ATP + H2O = N-acetyl-D-muramate 6-phosphate + ADP + H(+). It functions in the pathway amino-sugar metabolism; 1,6-anhydro-N-acetylmuramate degradation. Its pathway is cell wall biogenesis; peptidoglycan recycling. Functionally, catalyzes the specific phosphorylation of 1,6-anhydro-N-acetylmuramic acid (anhMurNAc) with the simultaneous cleavage of the 1,6-anhydro ring, generating MurNAc-6-P. Is required for the utilization of anhMurNAc either imported from the medium or derived from its own cell wall murein, and thus plays a role in cell wall recycling. The sequence is that of Anhydro-N-acetylmuramic acid kinase from Ralstonia nicotianae (strain ATCC BAA-1114 / GMI1000) (Ralstonia solanacearum).